Consider the following 271-residue polypeptide: Large ribosomal subunit protein uL3c (271 aa).

A chloroplast-targeting transit peptide spans 1–49 (MAIAMAVVSFPSLLNKTTLSSSLFTPTFLPAKSSSLLIKSSPKTRFVVS). The segment at 190–222 (HGSKSHRALGSIGAGTTPGRVYKGKKMPGRMGG) is disordered.

The protein belongs to the universal ribosomal protein uL3 family. In terms of assembly, part of the 50S ribosomal subunit.

The protein localises to the plastid. It is found in the chloroplast. In terms of biological role, one of the primary rRNA binding proteins, it binds directly near the 3'-end of the 23S rRNA, where it nucleates assembly of the 50S subunit. The protein is Large ribosomal subunit protein uL3c (RPL3A) of Arabidopsis thaliana (Mouse-ear cress).